Reading from the N-terminus, the 255-residue chain is MSLDLTPTLSPARPLDSADAMEDRLREIGAARYHDRHPFHHLLHGGQLTRGQVQAWALNRYYYQCSIPVKDAVVISRFRDRATRVEWRHRLEDHDGAEGTEGGIDRWLVLTDALGLDRDYVEATDGILPATRFAVDAYVHFVRDQSPLEAIASCLTELFAPHIHAERISGMLAHYDFVNPTVMAYFQRRLSQAPRDADYALRYVREHARTPQERAAVCNALIFKTQVLWTQLDALHHAYVLGHVPPGAFVPEDMR.

The protein belongs to the PqqC family.

The catalysed reaction is 6-(2-amino-2-carboxyethyl)-7,8-dioxo-1,2,3,4,7,8-hexahydroquinoline-2,4-dicarboxylate + 3 O2 = pyrroloquinoline quinone + 2 H2O2 + 2 H2O + H(+). Its pathway is cofactor biosynthesis; pyrroloquinoline quinone biosynthesis. Its function is as follows. Ring cyclization and eight-electron oxidation of 3a-(2-amino-2-carboxyethyl)-4,5-dioxo-4,5,6,7,8,9-hexahydroquinoline-7,9-dicarboxylic-acid to PQQ. This chain is Pyrroloquinoline-quinone synthase, found in Cereibacter sphaeroides (strain ATCC 17025 / ATH 2.4.3) (Rhodobacter sphaeroides).